A 426-amino-acid chain; its full sequence is D-tagatose-1,6-bisphosphate aldolase subunit KbaZ (426 aa).

Belongs to the GatZ/KbaZ family. KbaZ subfamily. Forms a complex with KbaY.

Its pathway is carbohydrate metabolism; D-tagatose 6-phosphate degradation; D-glyceraldehyde 3-phosphate and glycerone phosphate from D-tagatose 6-phosphate: step 2/2. Component of the tagatose-1,6-bisphosphate aldolase KbaYZ that is required for full activity and stability of the Y subunit. Could have a chaperone-like function for the proper and stable folding of KbaY. When expressed alone, KbaZ does not show any aldolase activity. The polypeptide is D-tagatose-1,6-bisphosphate aldolase subunit KbaZ (Escherichia coli (strain SMS-3-5 / SECEC)).